A 698-amino-acid chain; its full sequence is 4-hydroxybutyrate--CoA ligase [ADP-forming] (698 aa).

Residues 491–544 (QEVLKAYGLPLPKSTLAKNEAEAVKAAKKIGYPVVMKIASPQIIHKSDAGGVKV) enclose the ATP-grasp domain. Residue 517-544 (AKKIGYPVVMKIASPQIIHKSDAGGVKV) participates in ATP binding.

In the N-terminal section; belongs to the acetate CoA ligase alpha subunit family. The protein in the C-terminal section; belongs to the acetate CoA ligase beta subunit family. Mg(2+) is required as a cofactor. Requires Mn(2+) as cofactor.

The catalysed reaction is 4-hydroxybutanoate + ATP + CoA = 4-hydroxybutanoyl-CoA + ADP + phosphate. Functionally, involved in thaumarchaeal hydroxypropionate/hydroxybutyrate (HP/HB) cycle, a modified version of the autotrophic HP/HB cycle of Crenarchaeota. Catalyzes the formation of 4-hydroxybutyryl-CoA, ADP and phosphate from 4-hydroxybutyrate, coenzyme A (CoA) and ATP. Can also use acetate, propionate and butyrate, with poor catalytic efficiency. This Nitrosopumilus maritimus (strain SCM1) protein is 4-hydroxybutyrate--CoA ligase [ADP-forming].